Consider the following 434-residue polypeptide: Methylenetetrahydrofolate--tRNA-(uracil-5-)-methyltransferase TrmFO (434 aa).

10–15 provides a ligand contact to FAD; sequence GAGLAG.

This sequence belongs to the MnmG family. TrmFO subfamily. FAD is required as a cofactor.

The protein localises to the cytoplasm. The enzyme catalyses uridine(54) in tRNA + (6R)-5,10-methylene-5,6,7,8-tetrahydrofolate + NADH + H(+) = 5-methyluridine(54) in tRNA + (6S)-5,6,7,8-tetrahydrofolate + NAD(+). The catalysed reaction is uridine(54) in tRNA + (6R)-5,10-methylene-5,6,7,8-tetrahydrofolate + NADPH + H(+) = 5-methyluridine(54) in tRNA + (6S)-5,6,7,8-tetrahydrofolate + NADP(+). Its function is as follows. Catalyzes the folate-dependent formation of 5-methyl-uridine at position 54 (M-5-U54) in all tRNAs. The protein is Methylenetetrahydrofolate--tRNA-(uracil-5-)-methyltransferase TrmFO of Bacillus mycoides (strain KBAB4) (Bacillus weihenstephanensis).